A 150-amino-acid chain; its full sequence is Galactose-binding lectin (150 aa).

D-galactose-binding residues include His16 and Gly19. The N-linked (GlcNAc...) asparagine glycan is linked to Asn26. D-galactose is bound by residues Asp27, 35 to 37 (DIH), His64, and Gly67. A glycan (N-linked (GlcNAc...) asparagine) is linked at Asn74. D-galactose-binding positions include Glu75, 83 to 85 (DRH), His108, and Gly111. A glycan (N-linked (GlcNAc...) asparagine) is linked at Asn118. Residues Glu119 and 127-129 (DKH) contribute to the D-galactose site.

Homodimer. Likely to form large oligomers; oligomerization enhances hemagglutination activity. Glycosylated.

Its activity is regulated as follows. Hemagglutination activity is not dependent on divalent cations. Hemagglutination activity is highly inhibited by D-galactose and N-acetyl-D-galactosamine, and to a lesser extent by raffinose. Also inhibited by melibiose and alpha-lactose, but not by beta-lactose or D-glucose. Functionally, D-galactose-binding lectin. Also binds N-acetyl-D-galactosamine. Has hemagglutination activity towards all types of human erythrocytes (O, A and B) and rabbit erythrocytes. Agglutinates Gram-negative and Gram-positive bacteria including E.coli DH5-alpha and L.plantarum ATCC8014, respectively, and has bacteriostatic activity against them. Also agglutinates M.lysodeikticus. May be involved in innate immunity by recognizing and eliminating pathogens. The sequence is that of Galactose-binding lectin from Mytilus californianus (California mussel).